The following is a 543-amino-acid chain: Proline--tRNA ligase, chloroplastic/mitochondrial (543 aa).

The tract at residues 41–63 (ATAPSGTASPETKSSEVDRLRSD) is disordered. A compositionally biased stretch (basic and acidic residues) spans 53-63 (KSSEVDRLRSD).

It belongs to the class-II aminoacyl-tRNA synthetase family.

It localises to the plastid. It is found in the chloroplast. The protein resides in the mitochondrion. It carries out the reaction tRNA(Pro) + L-proline + ATP = L-prolyl-tRNA(Pro) + AMP + diphosphate. Catalyzes the attachment of proline to tRNA(Pro) in a two-step reaction: proline is first activated by ATP to form Pro-AMP and then transferred to the acceptor end of tRNA(Pro). The chain is Proline--tRNA ligase, chloroplastic/mitochondrial from Arabidopsis thaliana (Mouse-ear cress).